A 1066-amino-acid chain; its full sequence is FHIP family protein GI14169 (1066 aa).

Positions 1 to 11 (MSWLRTSPLRQ) are enriched in polar residues. Residues 1 to 35 (MSWLRTSPLRQSLTRSGSSSGNGSSGTATTMRQRP) form a disordered region. The segment covering 12–30 (SLTRSGSSSGNGSSGTATT) has biased composition (low complexity). S500 bears the Phosphoserine mark. Positions 651–682 (GIDVTTTTTASASDTDLEHNNNSSSISSGRRD) are disordered. The span at 655 to 678 (TTTTTASASDTDLEHNNNSSSISS) shows a compositional bias: low complexity. S820 is subject to Phosphoserine. 2 disordered regions span residues 821 to 913 (PLHQ…GNSA) and 935 to 1007 (SGGE…TGNF). A compositionally biased stretch (low complexity) spans 822 to 855 (LHQQLQHQQQHQQLAQTNSHTQQQQQQQQQQAQQ). Residues 856-874 (RSTYATLSAATPVQASPTS) are compositionally biased toward polar residues. The span at 890–913 (SRSITSMFSRRSTSSTPASNGNSA) shows a compositional bias: low complexity. Residues 947–971 (QDSTRGNTCETSLSTAPRQEPQTNV) are compositionally biased toward polar residues. The span at 972–997 (GSSSNSSIGSSTQTLSGTHSSSTLHG) shows a compositional bias: low complexity.

Belongs to the FHIP family.

This is FHIP family protein GI14169 from Drosophila mojavensis (Fruit fly).